The sequence spans 331 residues: Ketol-acid reductoisomerase (NADP(+)) (331 aa).

One can recognise a KARI N-terminal Rossmann domain in the interval 2–182 (AKVYYDEDAN…GGTKGGVLET (181 aa)). Residues 25 to 28 (YGSQ), Ser-51, Ser-53, and 83 to 86 (DEKQ) each bind NADP(+). The active site involves His-108. Gly-134 contributes to the NADP(+) binding site. Residues 183-328 (TFKDETETDL…VELRAMMPWL (146 aa)) form the KARI C-terminal knotted domain. Asp-191, Glu-195, Glu-227, and Glu-231 together coordinate Mg(2+). Ser-252 lines the substrate pocket.

It belongs to the ketol-acid reductoisomerase family. Requires Mg(2+) as cofactor.

The enzyme catalyses (2R)-2,3-dihydroxy-3-methylbutanoate + NADP(+) = (2S)-2-acetolactate + NADPH + H(+). It catalyses the reaction (2R,3R)-2,3-dihydroxy-3-methylpentanoate + NADP(+) = (S)-2-ethyl-2-hydroxy-3-oxobutanoate + NADPH + H(+). It functions in the pathway amino-acid biosynthesis; L-isoleucine biosynthesis; L-isoleucine from 2-oxobutanoate: step 2/4. Its pathway is amino-acid biosynthesis; L-valine biosynthesis; L-valine from pyruvate: step 2/4. Its function is as follows. Involved in the biosynthesis of branched-chain amino acids (BCAA). Catalyzes an alkyl-migration followed by a ketol-acid reduction of (S)-2-acetolactate (S2AL) to yield (R)-2,3-dihydroxy-isovalerate. In the isomerase reaction, S2AL is rearranged via a Mg-dependent methyl migration to produce 3-hydroxy-3-methyl-2-ketobutyrate (HMKB). In the reductase reaction, this 2-ketoacid undergoes a metal-dependent reduction by NADPH to yield (R)-2,3-dihydroxy-isovalerate. This is Ketol-acid reductoisomerase (NADP(+)) from Clostridium novyi (strain NT).